Here is a 551-residue protein sequence, read N- to C-terminus: ATP-dependent DNA helicase XPD (551 aa).

The Helicase ATP-binding domain occupies 1–228; that stretch reads MLKLRDWQEK…KLLNQLREVV (228 aa). 29–36 lines the ATP pocket; that stretch reads APTGSGKT. [4Fe-4S] cluster-binding residues include Cys88, Cys102, Cys105, and Cys137. The DEAH box signature appears at 180–183; it reads DEAH.

Belongs to the helicase family. RAD3/XPD subfamily. In terms of assembly, monomer. The cofactor is [4Fe-4S] cluster.

The catalysed reaction is Couples ATP hydrolysis with the unwinding of duplex DNA at the replication fork by translocating in the 5'-3' direction. This creates two antiparallel DNA single strands (ssDNA). The leading ssDNA polymer is the template for DNA polymerase III holoenzyme which synthesizes a continuous strand.. It catalyses the reaction ATP + H2O = ADP + phosphate + H(+). Functionally, ATP-dependent 5'-3' DNA helicase. Thought to be involved in nucleotide excision repair (NER) of DNA. The chain is ATP-dependent DNA helicase XPD from Sulfolobus acidocaldarius (strain ATCC 33909 / DSM 639 / JCM 8929 / NBRC 15157 / NCIMB 11770).